Reading from the N-terminus, the 940-residue chain is BTB/POZ domain-containing protein FBL11 (940 aa).

Positions Trp41–Ser109 constitute a BTB domain. The BACK domain maps to Ile155–Ala258.

It participates in protein modification; protein ubiquitination. Its function is as follows. May act as a substrate-specific adapter of an E3 ubiquitin-protein ligase complex (CUL3-RBX1-BTB) which mediates the ubiquitination and subsequent proteasomal degradation of target proteins. This Arabidopsis thaliana (Mouse-ear cress) protein is BTB/POZ domain-containing protein FBL11 (FBL11).